The chain runs to 547 residues: Cilia- and flagella- associated protein 210 (547 aa).

A coiled-coil region spans residues 184–254; that stretch reads KLNVEKAFKE…EIEMKKKQGK (71 aa). Residues 210–237 form a disordered region; sequence KDHLKQIKEHEEEEERRRKEEEKDAEEI.

In terms of assembly, microtubule inner protein component of sperm flagellar doublet microtubules. As to expression, expressed in trachea multiciliated cells.

It localises to the cytoplasm. Its subcellular location is the cytoskeleton. The protein localises to the cilium axoneme. It is found in the flagellum axoneme. Functionally, microtubule inner protein (MIP) part of the dynein-decorated doublet microtubules (DMTs) in cilia axoneme, which is required for motile cilia beating. In Bos taurus (Bovine), this protein is Cilia- and flagella- associated protein 210 (CFAP210).